Consider the following 179-residue polypeptide: Fimbrial subunit ElfA (179 aa).

Positions 1–21 (MKKSVLTAFITVVCATSSVMA) are cleaved as a signal peptide.

It belongs to the fimbrial protein family.

It localises to the fimbrium. Its function is as follows. Part of the elfADCG-ycbUVF fimbrial operon, which promotes adhesion of bacteria to different abiotic surfaces. ElfA is the major fimbrial subunit produced by this operon. The chain is Fimbrial subunit ElfA (elfA) from Escherichia coli (strain K12).